Reading from the N-terminus, the 128-residue chain is uncharacterized protein (128 aa).

This is an uncharacterized protein from Borreliella burgdorferi (strain ATCC 35210 / DSM 4680 / CIP 102532 / B31) (Borrelia burgdorferi).